A 139-amino-acid chain; its full sequence is Intrinsically disordered protein, expressed in pharynx 15 (139 aa).

A compositionally biased stretch (polar residues) spans Met-1–Thr-12. Positions Met-1 to Ser-98 are disordered. Composition is skewed to low complexity over residues Thr-13–Thr-41 and Gln-49–Ser-98.

This chain is Intrinsically disordered protein, expressed in pharynx 15, found in Caenorhabditis elegans.